The sequence spans 240 residues: CD302 antigen (240 aa).

A C-type lectin domain is found at Phe-40 to Leu-160. The N-linked (GlcNAc...) asparagine glycan is linked to Asn-117. Residues Cys-136 and Cys-151 are joined by a disulfide bond. The chain crosses the membrane as a helical span at residues Ile-177–Ile-197. The Cytoplasmic portion of the chain corresponds to Trp-198–Asp-240.

The protein resides in the membrane. It localises to the cell projection. Its subcellular location is the filopodium. The protein localises to the cytoplasm. It is found in the cell cortex. In terms of biological role, potential multifunctional C-type lectin receptor that may play roles in endocytosis and phagocytosis as well as in cell adhesion and migration. The chain is CD302 antigen from Sus scrofa (Pig).